Consider the following 463-residue polypeptide: Heterogeneous nuclear ribonucleoprotein K (463 aa).

Position 1 is an N-acetylmethionine (methionine 1). Residues 1–37 are disordered; sequence METEQPEETFPNTETNGEFGKRPAEDMEEEQAFKRSR. The necessary for interaction with DDX1 stretch occupies residues 1–276; sequence METEQPEETF…GRGGRPMPPS (276 aa). The segment covering 19–37 has biased composition (basic and acidic residues); it reads FGKRPAEDMEEEQAFKRSR. N6-acetyllysine; alternate is present on lysine 34. Lysine 34 is covalently cross-linked (Glycyl lysine isopeptide (Lys-Gly) (interchain with G-Cter in SUMO1); alternate). Lysine 34 is covalently cross-linked (Glycyl lysine isopeptide (Lys-Gly) (interchain with G-Cter in SUMO2); alternate). At serine 36 the chain carries Phosphoserine. Threonine 39 is modified (phosphothreonine). In terms of domain architecture, KH 1 spans 42–104; that stretch reads MVELRILLQS…ETIGEILKKI (63 aa). Glycyl lysine isopeptide (Lys-Gly) (interchain with G-Cter in SUMO2) cross-links involve residues lysine 52 and lysine 60. A run of 2 repeats spans residues 54 to 76 and 59 to 62. The segment at 54–421 is 2 X 22 AA approximate repeats; the sequence is AGAVIGKGGK…QIRHESGASI (368 aa). Residues 59-407 are 5 X 4 AA repeats of G-X-G-G; that stretch reads GKGGKNIKAL…LAGSIIGKGG (349 aa). A phosphoserine mark is found at serine 75 and serine 116. The KH 2 domain occupies 144–209; it reads DCELRLLIHQ…DRVVECIKII (66 aa). Lysine 163 is covalently cross-linked (Glycyl lysine isopeptide (Lys-Gly) (interchain with G-Cter in SUMO1); alternate). Lysine 163 is covalently cross-linked (Glycyl lysine isopeptide (Lys-Gly) (interchain with G-Cter in SUMO2); alternate). N6-acetyllysine is present on lysine 198. The segment at 209 to 337 is interaction with ZIK1; sequence ILDLISESPI…RPGDRYDGMV (129 aa). A phosphoserine mark is found at serine 214 and serine 216. A Glycyl lysine isopeptide (Lys-Gly) (interchain with G-Cter in SUMO2); alternate cross-link involves residue lysine 219. Lysine 219 carries the N6-succinyllysine; alternate modification. The tract at residues 236 to 273 is RNA-binding RGG-box; that stretch reads YGGFTMMFDDRRGRPVGFPMRGRGGFDRMPPGRGGRPM. 3 consecutive repeat copies span residues 245–250, 257–260, and 267–270. The 2 X 6 AA repeats of D-R-R-G-R-P stretch occupies residues 245–329; the sequence is DRRGRPVGFP…LMAYDRRGRP (85 aa). The disordered stretch occupies residues 250 to 329; sequence PVGFPMRGRG…LMAYDRRGRP (80 aa). The segment covering 252-266 has biased composition (low complexity); sequence GFPMRGRGGFDRMPP. Over residues 276–285 the composition is skewed to basic and acidic residues; it reads SRRDYDDMSP. A Phosphoserine modification is found at serine 284. A 3-4 repeat occupies 295–298; it reads GRGG. Arginine 316 bears the Omega-N-methylarginine mark. Residues 324 to 329 form a 2-2 repeat; the sequence is DRRGRP. Arginine 377 is subject to Omega-N-methylarginine. The residue at position 379 (serine 379) is a Phosphoserine. Tyrosine 380 is subject to Phosphotyrosine. The KH 3 domain occupies 387 to 451; that stretch reads IITTQVTIPK…DQIQNAQYLL (65 aa). Repeat copies occupy residues 399 to 421 and 404 to 407. Lysine 405 is modified (N6-acetyllysine; alternate). Residue lysine 405 forms a Glycyl lysine isopeptide (Lys-Gly) (interchain with G-Cter in SUMO2); alternate linkage. Serine 420 carries the post-translational modification Phosphoserine. A Glycyl lysine isopeptide (Lys-Gly) (interchain with G-Cter in SUMO1); alternate cross-link involves residue lysine 422. A Glycyl lysine isopeptide (Lys-Gly) (interchain with G-Cter in SUMO2); alternate cross-link involves residue lysine 422. Lysine 422 participates in a covalent cross-link: Glycyl lysine isopeptide (Lys-Gly) (interchain with G-Cter in SUMO); alternate.

In terms of assembly, identified in the spliceosome C complex. Interacts with ANKRD28, RBM42 and ZIK1. Interacts with DDX1. Interacts with MDM2; this interaction leads to ubiquitination and proteasomal degradation. Interacts with p53/TP53. Interacts with BRDT. Interacts with IVNS1ABP. Interacts with PPIA/CYPA. Part of a transcription inhibitory ribonucleoprotein complex composed at least of the circular RNA circZNF827, ZNF827 and HNRNPL. In terms of processing, sumoylated by CBX4. Sumoylation is increased upon DNA damage, such as that produced by doxorubicin, etoposide, UV light and camptothecin, due to enhanced CBX4 phosphorylation by HIPK2 under these conditions. Ubiquitinated by MDM2. Doxorubicin treatment does not affect monoubiquitination, but slightly decreases HNRNPK poly-ubiquitination. Post-translationally, O-glycosylated (O-GlcNAcylated), in a cell cycle-dependent manner.

It localises to the cytoplasm. Its subcellular location is the nucleus. The protein localises to the nucleoplasm. The protein resides in the cell projection. It is found in the podosome. In terms of biological role, one of the major pre-mRNA-binding proteins. Binds tenaciously to poly(C) sequences. Likely to play a role in the nuclear metabolism of hnRNAs, particularly for pre-mRNAs that contain cytidine-rich sequences. Can also bind poly(C) single-stranded DNA. Plays an important role in p53/TP53 response to DNA damage, acting at the level of both transcription activation and repression. When sumoylated, acts as a transcriptional coactivator of p53/TP53, playing a role in p21/CDKN1A and 14-3-3 sigma/SFN induction. As far as transcription repression is concerned, acts by interacting with long intergenic RNA p21 (lincRNA-p21), a non-coding RNA induced by p53/TP53. This interaction is necessary for the induction of apoptosis, but not cell cycle arrest. As part of a ribonucleoprotein complex composed at least of ZNF827, HNRNPL and the circular RNA circZNF827 that nucleates the complex on chromatin, may negatively regulate the transcription of genes involved in neuronal differentiation. In Oryctolagus cuniculus (Rabbit), this protein is Heterogeneous nuclear ribonucleoprotein K (HNRNPK).